The chain runs to 39 residues: Natriuretic peptide PaNP-d (39 aa).

The propeptide occupies 1–8; sequence SGSKTAEI. Residues 1–39 form a disordered region; the sequence is SGSKTAEIDDGCFGLPLDPIGSTSGMGCRSVPKPIPGGS. C12 and C28 are joined by a disulfide.

This sequence belongs to the natriuretic peptide family. Expressed by the venom gland.

It is found in the secreted. Functionally, snake venom natriuretic peptide that targets both NPR1 and NPR2. Exhibits hypotensive and vasodepressor activities. This is Natriuretic peptide PaNP-d from Pseudechis australis (Mulga snake).